Consider the following 307-residue polypeptide: Elongation factor Ts (307 aa).

The involved in Mg(2+) ion dislocation from EF-Tu stretch occupies residues 80–83; sequence TDFV.

This sequence belongs to the EF-Ts family.

It localises to the cytoplasm. Its function is as follows. Associates with the EF-Tu.GDP complex and induces the exchange of GDP to GTP. It remains bound to the aminoacyl-tRNA.EF-Tu.GTP complex up to the GTP hydrolysis stage on the ribosome. In Clostridium botulinum (strain 657 / Type Ba4), this protein is Elongation factor Ts.